Here is a 294-residue protein sequence, read N- to C-terminus: Proline iminopeptidase (294 aa).

The AB hydrolase-1 domain maps to 28–278 (PLLLLHGGPG…GCGHMPFVQE (251 aa)). The active-site Nucleophile is the S106. D245 is an active-site residue. The active-site Proton donor is H272.

Belongs to the peptidase S33 family. In terms of assembly, homotrimer.

It localises to the cell envelope. It carries out the reaction Release of N-terminal proline from a peptide.. With respect to regulation, inhibited by 3,4-DCI, but no significant effect on enzyme activity by pepstatin A, E-64, 1,10-phenanthroline or EDTA. In terms of biological role, releases the N-terminal proline from various substrates. Cleaves Pro-betaNA (L-prolyl-beta-naphthylamide) effectively. This chain is Proline iminopeptidase (pip), found in Lactobacillus delbrueckii subsp. lactis.